A 176-amino-acid chain; its full sequence is Large ribosomal subunit protein uL6 (176 aa).

This sequence belongs to the universal ribosomal protein uL6 family. Part of the 50S ribosomal subunit.

In terms of biological role, this protein binds to the 23S rRNA, and is important in its secondary structure. It is located near the subunit interface in the base of the L7/L12 stalk, and near the tRNA binding site of the peptidyltransferase center. This Paraburkholderia xenovorans (strain LB400) protein is Large ribosomal subunit protein uL6.